The primary structure comprises 295 residues: Glycine--tRNA ligase alpha subunit (295 aa).

The protein belongs to the class-II aminoacyl-tRNA synthetase family. Tetramer of two alpha and two beta subunits.

Its subcellular location is the cytoplasm. It carries out the reaction tRNA(Gly) + glycine + ATP = glycyl-tRNA(Gly) + AMP + diphosphate. The chain is Glycine--tRNA ligase alpha subunit from Prochlorococcus marinus (strain MIT 9215).